We begin with the raw amino-acid sequence, 68 residues long: UPF0291 protein TTE2340 (68 aa).

This sequence belongs to the UPF0291 family.

Its subcellular location is the cytoplasm. This chain is UPF0291 protein TTE2340, found in Caldanaerobacter subterraneus subsp. tengcongensis (strain DSM 15242 / JCM 11007 / NBRC 100824 / MB4) (Thermoanaerobacter tengcongensis).